The sequence spans 219 residues: Orotate phosphoribosyltransferase (219 aa).

Position 26 (lysine 26) interacts with 5-phospho-alpha-D-ribose 1-diphosphate. 34–35 is an orotate binding site; that stretch reads FF. Residues 72–73, arginine 98, lysine 99, lysine 102, histidine 104, and 124–132 each bind 5-phospho-alpha-D-ribose 1-diphosphate; these read YK and DDVITAGTA. Threonine 128 and arginine 156 together coordinate orotate.

The protein belongs to the purine/pyrimidine phosphoribosyltransferase family. PyrE subfamily. As to quaternary structure, homodimer. Mg(2+) is required as a cofactor.

It carries out the reaction orotidine 5'-phosphate + diphosphate = orotate + 5-phospho-alpha-D-ribose 1-diphosphate. The protein operates within pyrimidine metabolism; UMP biosynthesis via de novo pathway; UMP from orotate: step 1/2. In terms of biological role, catalyzes the transfer of a ribosyl phosphate group from 5-phosphoribose 1-diphosphate to orotate, leading to the formation of orotidine monophosphate (OMP). This Xanthomonas euvesicatoria pv. vesicatoria (strain 85-10) (Xanthomonas campestris pv. vesicatoria) protein is Orotate phosphoribosyltransferase.